The chain runs to 468 residues: MDYLPIFCRLDNKPVLLVGGGEVAERKARLLLDAGAQLTVVAPELDPELAELAANGSIEWLAGEFAPQQLTGKWLVVAATDRREVNALVYQSANQARIFANVVDDPKRSSFIMPSIIDRSPLMVAISSGGKAPVLARLLREKLEALLPQHLGAVAAFAGSLRERVKARFASMGERRRFWERLLGADRLGQALARGDSASANQLADSLFADESQSGGEVVLVGAGPGDPGLLTLHALRQMQQADVVVYDRLVSDEVMALVRRDARRIFVGKQAGNHCVPQEGINQLLLDEAKKGQRVVRLKGGDPFIFGRGGEELETLVGSGIGFQVVPGITAASGCAAYAGIPLTHRDHAQSVRFVTAHGKGGAQDLDWPLLAKDKQTLVFYMGLSSCTTIREQLLTHGKAGDTPVALIERGTQPSQRVIRGTLAQLPELALGVESPALIMVGSVVTLADQLAWFGQGGAADAALASA.

Positions 1 to 204 are precorrin-2 dehydrogenase /sirohydrochlorin ferrochelatase; that stretch reads MDYLPIFCRL…GDSASANQLA (204 aa). Residues 22-23 and 43-44 contribute to the NAD(+) site; these read EV and PE. Ser-128 is modified (phosphoserine). A uroporphyrinogen-III C-methyltransferase region spans residues 216–468; that stretch reads GEVVLVGAGP…GAADAALASA (253 aa). Pro-225 is an S-adenosyl-L-methionine binding site. Residue Asp-248 is the Proton acceptor of the active site. Lys-270 functions as the Proton donor in the catalytic mechanism. Residues 301-303, Ile-306, 331-332, Met-383, and Gly-412 contribute to the S-adenosyl-L-methionine site; these read GGD and TA.

In the N-terminal section; belongs to the precorrin-2 dehydrogenase / sirohydrochlorin ferrochelatase family. The protein in the C-terminal section; belongs to the precorrin methyltransferase family.

It catalyses the reaction uroporphyrinogen III + 2 S-adenosyl-L-methionine = precorrin-2 + 2 S-adenosyl-L-homocysteine + H(+). The catalysed reaction is precorrin-2 + NAD(+) = sirohydrochlorin + NADH + 2 H(+). The enzyme catalyses siroheme + 2 H(+) = sirohydrochlorin + Fe(2+). It functions in the pathway cofactor biosynthesis; adenosylcobalamin biosynthesis; precorrin-2 from uroporphyrinogen III: step 1/1. The protein operates within cofactor biosynthesis; adenosylcobalamin biosynthesis; sirohydrochlorin from precorrin-2: step 1/1. It participates in porphyrin-containing compound metabolism; siroheme biosynthesis; precorrin-2 from uroporphyrinogen III: step 1/1. Its pathway is porphyrin-containing compound metabolism; siroheme biosynthesis; siroheme from sirohydrochlorin: step 1/1. It functions in the pathway porphyrin-containing compound metabolism; siroheme biosynthesis; sirohydrochlorin from precorrin-2: step 1/1. Functionally, multifunctional enzyme that catalyzes the SAM-dependent methylations of uroporphyrinogen III at position C-2 and C-7 to form precorrin-2 via precorrin-1. Then it catalyzes the NAD-dependent ring dehydrogenation of precorrin-2 to yield sirohydrochlorin. Finally, it catalyzes the ferrochelation of sirohydrochlorin to yield siroheme. This Aeromonas hydrophila subsp. hydrophila (strain ATCC 7966 / DSM 30187 / BCRC 13018 / CCUG 14551 / JCM 1027 / KCTC 2358 / NCIMB 9240 / NCTC 8049) protein is Siroheme synthase 3.